Reading from the N-terminus, the 236-residue chain is Eukaryotic translation initiation factor 3 subunit J (236 aa).

Residues 1–88 are disordered; sequence MADDWESAAD…EAEAQRVASL (88 aa). Acidic residues predominate over residues 28–46; the sequence is GEDEDEDIKDSWEDEEEKK. 2 stretches are compositionally biased toward basic and acidic residues: residues 47–58 and 68–77; these read DEEKPTKTEAPA and AKLEQQARLE.

It belongs to the eIF-3 subunit J family. Component of the eukaryotic translation initiation factor 3 (eIF-3) complex. The eIF-3 complex interacts with pix.

It localises to the cytoplasm. In terms of biological role, component of the eukaryotic translation initiation factor 3 (eIF-3) complex, which is involved in protein synthesis of a specialized repertoire of mRNAs and, together with other initiation factors, stimulates binding of mRNA and methionyl-tRNAi to the 40S ribosome. The eIF-3 complex specifically targets and initiates translation of a subset of mRNAs involved in cell proliferation. The chain is Eukaryotic translation initiation factor 3 subunit J from Drosophila erecta (Fruit fly).